Here is a 143-residue protein sequence, read N- to C-terminus: Large ribosomal subunit protein uL15 (143 aa).

Residues 1 to 51 form a disordered region; that stretch reads MRLNSIAPAPGSRPSAKRVGRGIGSGLGKTAGRGHKGQKARAGGYHKVGFE. The span at 21 to 31 shows a compositional bias: gly residues; it reads RGIGSGLGKTA.

The protein belongs to the universal ribosomal protein uL15 family. As to quaternary structure, part of the 50S ribosomal subunit.

Binds to the 23S rRNA. This Thioalkalivibrio sulfidiphilus (strain HL-EbGR7) protein is Large ribosomal subunit protein uL15.